Consider the following 242-residue polypeptide: Transcription factor TCP17 (242 aa).

The region spanning 33–91 (GKDRHSKVCTVRGLRDRRIRLSVMTAIQVYDLQERLGLSQPSKVIDWLLEVAKNDVDLL) is the TCP domain.

In terms of assembly, interacts with SPL. Expressed in cotyledons, particularly in the vascular region, in leaves, roots, stems, buds, flowers and siliques.

The protein resides in the nucleus. Its function is as follows. Plays a pivotal role in the control of morphogenesis of shoot organs by negatively regulating the expression of boundary-specific genes such as CUC genes, probably through the induction of miRNA (e.g. miR164). Participates in ovule development. In Arabidopsis thaliana (Mouse-ear cress), this protein is Transcription factor TCP17 (TCP17).